Reading from the N-terminus, the 249-residue chain is MSEAAETLDGWYSLHLFYAVDWTTFRLIAEDDREAMITELETFIKDKTVARESHQGDHAIYNITGQKADLLLWFLRPEMKELNQIENEFNKLRIADYLIPTYSYVSVIELSNYLAGKSDEDPYENPHVKARLYPELPHSEYICFYPMDKRRNETYNWYMLPIEDRKTLMYNHGMIGRKYAGKIKQFITGSVGFDDYEWGVTLFSNDVLQFKKIVYEMRFDETTARYGEFGSFYIGHILNIEDFKQFFSI.

Fe-coproporphyrin III-binding positions include Arg-131, Tyr-145–Lys-149, His-172, and Gln-185. The active site involves Tyr-145.

The protein belongs to the ChdC family. Type 1 subfamily. Fe-coproporphyrin III serves as cofactor.

It carries out the reaction Fe-coproporphyrin III + 2 H2O2 + 2 H(+) = heme b + 2 CO2 + 4 H2O. It catalyses the reaction Fe-coproporphyrin III + H2O2 + H(+) = harderoheme III + CO2 + 2 H2O. The enzyme catalyses harderoheme III + H2O2 + H(+) = heme b + CO2 + 2 H2O. It participates in porphyrin-containing compound metabolism; protoheme biosynthesis. Its function is as follows. Involved in coproporphyrin-dependent heme b biosynthesis. Catalyzes the decarboxylation of Fe-coproporphyrin III (coproheme) to heme b (protoheme IX), the last step of the pathway. The reaction occurs in a stepwise manner with a three-propionate intermediate. In Staphylococcus epidermidis (strain ATCC 12228 / FDA PCI 1200), this protein is Coproheme decarboxylase.